Reading from the N-terminus, the 283-residue chain is Nucleoid occlusion protein (283 aa).

A DNA-binding region (H-T-H motif) is located at residues 148–167 (EALAQRLGKGQSTIANKLRL).

The protein belongs to the ParB family.

The protein localises to the cytoplasm. It is found in the nucleoid. Its function is as follows. Effects nucleoid occlusion by binding relatively nonspecifically to DNA and preventing the assembly of the division machinery in the vicinity of the nucleoid, especially under conditions that disturb the cell cycle. It helps to coordinate cell division and chromosome segregation by preventing the formation of the Z ring through the nucleoid, which would cause chromosome breakage. In Bacillus subtilis (strain 168), this protein is Nucleoid occlusion protein (noc).